The sequence spans 421 residues: MPFGCLTLGEKKDYNSPSEVTDKYDLGQVVKSEEFCEIFRAKDRNTLKMYTCKKFNKKDGRKVRKAAKNEIMILKMVKHHNILQLVDAFETKKEYFIFLELATGREVFDWILDQGYYSERDTSNVMRQVLEAVAYLHSLKIVHRNLKNLVYFNRLKHSKIVISDFQLAKLENGLIKDPCGTPEYLAPEVIGRQRYGRPVDCWAIGVIMYILLSGNPPFYDDGDEEDSDSRDKNLFLKILSGDYEFDSPYWDDISDSAKTLVASLMEVDQDQRLTAQEAIAHEWISGNAASDKNIKDGVCAQIEKNFAKAKWKKAVRVTTLMKRLRASEQGDTGASGLAAGATGGPPDPNMPGGSLLAASIKTALSEKAADAQTSTIPSLPQPPAARPEEQQQAQQQQQAQQQQQARCNGDVPQMLPQRKGY.

Residues 24–284 (YDLGQVVKSE…AQEAIAHEWI (261 aa)) form the Protein kinase domain. Residues 326-421 (ASEQGDTGAS…PQMLPQRKGY (96 aa)) are disordered. Low complexity-rich tracts occupy residues 330–340 (GDTGASGLAAG) and 390–406 (QQQA…QQAR).

This sequence belongs to the protein kinase superfamily. CAMK Ser/Thr protein kinase family. Interacts with calmodulin, in the presence of calcium. The cofactor is Ca(2+). In terms of tissue distribution, ubiquitously expressed.

It localises to the cytoplasmic vesicle membrane. Functionally, does not appear to have detectable kinase activity. This is CaM kinase-like vesicle-associated protein (camkv) from Takifugu rubripes (Japanese pufferfish).